The sequence spans 1807 residues: Integrin beta-4 (1807 aa).

A signal peptide spans 1–27; that stretch reads MAGLCSSPWVKLLLAVVLSAGLPGNMA. At 28 to 713 the chain is on the extracellular side; it reads NRCKKAQVKS…KKKDCLPAPS (686 aa). A PSI domain is found at 29-73; the sequence is RCKKAQVKSCTECIRVDKSCAYCTDELFKERRCNTQADVLAAGCR. 8 disulfide bridges follow: Cys30–Cys48, Cys38–Cys456, Cys41–Cys61, Cys51–Cys72, Cys245–Cys288, Cys458–Cys477, Cys469–Cys480, and Cys482–Cys491. The VWFA domain occupies 131–340; sequence DLYILMDFSN…SYYEKLHKYF (210 aa). Residues Ser139 and Ser141 each contribute to the Mg(2+) site. Ca(2+) is bound by residues Ser141, Asp144, Asp145, and Asp176. The interval 194–199 is involved in NRG1- and IGF1-binding; sequence WPNSDP. The Ca(2+) site is built by Asn228, Asp230, Pro232, and Glu233. Glu233 provides a ligand contact to Mg(2+). The N-linked (GlcNAc...) asparagine glycan is linked to Asn327. Position 350 (Glu350) interacts with Ca(2+). 4 I-EGF domains span residues 458-492, 493-538, 539-575, and 576-617; these read CELQKEVQSARCHYRGDFMCGHCVCNEGWSGKTCN, CSTG…HFCE, YDNFQCPRTSGFLCNDRGRCSMGECVCEPGWTGRSCD, and CPLS…TTCE. Asn492 carries N-linked (GlcNAc...) asparagine glycosylation. Intrachain disulfides connect Cys493–Cys521, Cys504–Cys519, Cys513–Cys524, Cys526–Cys537, Cys544–Cys558, Cys552–Cys563, Cys565–Cys574, Cys576–Cys599, Cys583–Cys597, Cys591–Cys602, and Cys604–Cys616. Asn580 carries N-linked (GlcNAc...) asparagine glycosylation. N-linked (GlcNAc...) asparagine glycosylation occurs at Asn619. Cystine bridges form between Cys628–Cys673, Cys634–Cys653, Cys637–Cys650, and Cys682–Cys708. N-linked (GlcNAc...) asparagine glycosylation is present at Asn697. The chain crosses the membrane as a helical span at residues 714–734; the sequence is WWLIPLLIFLLLLLVLLLLLC. The interval 734–751 is palmitoylated on several cysteines; the sequence is CWKYCACCKACLGLLPCC. The Cytoplasmic portion of the chain corresponds to 735–1807; the sequence is WKYCACCKAC…THMDQQFFQT (1073 aa). 3 positions are modified to phosphoserine: Ser773, Ser1071, and Ser1121. The region spanning 981-1086 is the Calx-beta domain; sequence VNITIIKEQA…QVRRFQVQLS (106 aa). The segment at 1119-1141 is disordered; it reads SASPPLPRGDLGAPQNPNAKAAG. 2 consecutive Fibronectin type-III domains span residues 1131–1220 and 1224–1323; these read APQN…THQE and EPGR…TQPK. Ser1386, Ser1389, and Ser1405 each carry phosphoserine. The residue at position 1418 (Thr1418) is a Phosphothreonine. Ser1425 carries the phosphoserine modification. At Thr1514 the chain carries Phosphothreonine. Fibronectin type-III domains are found at residues 1514–1609 and 1627–1723; these read TPTR…VHPQ and APGP…SQDG. Ser1776 bears the Phosphoserine mark.

It belongs to the integrin beta chain family. As to quaternary structure, heterodimer of an alpha and a beta subunit. Beta-4 associates with alpha-6. Interacts (via cytoplasmic region) with COL17A1 (via cytoplasmic region). Interacts (via cytoplasmic region) with DST isoform 3 (via N-terminus). Interacts (via cytoplasmic domain) with DST (via N-terminus). Interacts with RAC1. ITGA6:ITGB4 is found in a ternary complex with NRG1 and ERBB3. ITGA6:ITGB4 is found in a ternary complex with IGF1 and IGF1R. ITGA6:ITGB4 interacts with IGF2. Interacts with TMEM268; this interaction prevents ITGB4 degradation. In terms of processing, palmitoylated by DHHC3 at several cysteines of the membrane-proximal region, enhancing stability and cell surface expression. Palmitoylation also promotes secondary association with tertaspanins.

It localises to the cell membrane. It is found in the cell junction. The protein localises to the hemidesmosome. Integrin alpha-6/beta-4 is a receptor for laminin. It plays a critical structural role in the hemidesmosome of epithelial cells. Is required for the regulation of keratinocyte polarity and motility. ITGA6:ITGB4 binds to NRG1 (via EGF domain) and this binding is essential for NRG1-ERBB signaling. ITGA6:ITGB4 binds to IGF1 and this binding is essential for IGF1 signaling. ITGA6:ITGB4 binds to IGF2 and this binding is essential for IGF2 signaling. In Rattus norvegicus (Rat), this protein is Integrin beta-4 (Itgb4).